Reading from the N-terminus, the 149-residue chain is D-aminoacyl-tRNA deacylase (149 aa).

The Gly-cisPro motif, important for rejection of L-amino acids motif lies at 137–138; the sequence is GP.

Belongs to the DTD family. As to quaternary structure, homodimer.

It localises to the cytoplasm. The catalysed reaction is glycyl-tRNA(Ala) + H2O = tRNA(Ala) + glycine + H(+). It catalyses the reaction a D-aminoacyl-tRNA + H2O = a tRNA + a D-alpha-amino acid + H(+). An aminoacyl-tRNA editing enzyme that deacylates mischarged D-aminoacyl-tRNAs. Also deacylates mischarged glycyl-tRNA(Ala), protecting cells against glycine mischarging by AlaRS. Acts via tRNA-based rather than protein-based catalysis; rejects L-amino acids rather than detecting D-amino acids in the active site. By recycling D-aminoacyl-tRNA to D-amino acids and free tRNA molecules, this enzyme counteracts the toxicity associated with the formation of D-aminoacyl-tRNA entities in vivo and helps enforce protein L-homochirality. In Halothermothrix orenii (strain H 168 / OCM 544 / DSM 9562), this protein is D-aminoacyl-tRNA deacylase.